A 210-amino-acid polypeptide reads, in one-letter code: HTH-type transcriptional repressor ComR (210 aa).

The region spanning 18-78 (VFDRDAALDK…AVLDRYIDRF (61 aa)) is the HTH tetR-type domain. Positions 41–60 (SLADLVEATGAKAPTLYAEF) form a DNA-binding region, H-T-H motif.

With respect to regulation, binding to the promoter region of BhsA/ComC is released in the presence of copper. Functionally, represses expression of BhsA/ComC by binding to its promoter region in the absence of copper. The polypeptide is HTH-type transcriptional repressor ComR (comR) (Escherichia coli (strain K12)).